The sequence spans 672 residues: Tubulin--tyrosine ligase-like protein 12 (672 aa).

One can recognise a TTL domain in the interval 332–670 (KIKIFLQIFA…LDEIDPTKVT (339 aa)). ATP-binding positions include 480 to 483 (CEYI), Lys-499, and Asp-501.

Belongs to the tubulin--tyrosine ligase family.

In terms of biological role, regulates microtubule dynamics in uterine muscle cells. The polypeptide is Tubulin--tyrosine ligase-like protein 12 (Caenorhabditis briggsae).